A 249-amino-acid polypeptide reads, in one-letter code: Sugar fermentation stimulation protein homolog (249 aa).

The protein belongs to the SfsA family.

The polypeptide is Sugar fermentation stimulation protein homolog (Synechococcus sp. (strain RCC307)).